Here is a 608-residue protein sequence, read N- to C-terminus: uncharacterized protein (608 aa).

Residues 4–24 (LIFMALLMSLLFIGTVFGYGD) form a helical membrane-spanning segment.

The protein to M.jannaschii MJ1394 and A.fulgidus AF2028.

The protein localises to the membrane. This is an uncharacterized protein from Methanocaldococcus jannaschii (strain ATCC 43067 / DSM 2661 / JAL-1 / JCM 10045 / NBRC 100440) (Methanococcus jannaschii).